Consider the following 1123-residue polypeptide: Probable serine/threonine-protein kinase nek3 (1123 aa).

Residues 4-264 (YEEIKTIGKG…VNDILELPFI (261 aa)) form the Protein kinase domain. ATP contacts are provided by residues 10 to 18 (IGKGSFGRA) and K33. D130 acts as the Proton acceptor in catalysis. 2 stretches are compositionally biased toward low complexity: residues 283 to 307 (NNDS…ISSS) and 327 to 415 (NNNN…TSLK). 6 disordered regions span residues 283 to 310 (NNDS…STEV), 325 to 415 (NINN…TSLK), 440 to 802 (SKTP…TNSQ), 866 to 887 (SAST…TNTM), 908 to 937 (SVKL…SITD), and 990 to 1020 (SLNN…NQNN). The span at 440 to 459 (SKTPISGTKNPTTSKITPSI) shows a compositional bias: polar residues. Composition is skewed to low complexity over residues 478-529 (SKPT…SSSV), 557-576 (SNLS…SNSQ), 588-617 (SPTS…SLKS), and 642-653 (NGNSNVNSTVLN). The span at 654–665 (RSVSSLSIQHKP) shows a compositional bias: polar residues. Composition is skewed to low complexity over residues 666 to 696 (TNSG…TSTT), 712 to 738 (STPT…TPST), and 752 to 802 (SSNG…TNSQ). Low complexity predominate over residues 908-935 (SVKLSSKSSSPIKTSSSSSSSSSSSSSI).

It belongs to the protein kinase superfamily. NEK Ser/Thr protein kinase family. NIMA subfamily.

It carries out the reaction L-seryl-[protein] + ATP = O-phospho-L-seryl-[protein] + ADP + H(+). It catalyses the reaction L-threonyl-[protein] + ATP = O-phospho-L-threonyl-[protein] + ADP + H(+). The chain is Probable serine/threonine-protein kinase nek3 (nek3) from Dictyostelium discoideum (Social amoeba).